Reading from the N-terminus, the 361-residue chain is Glutaminyl-peptide cyclotransferase (361 aa).

The first 28 residues, 1 to 28 (MAGGRHRRVVGTLHLLLLVAALPWASRG), serve as a signal peptide directing secretion. The N-linked (GlcNAc...) asparagine glycan is linked to asparagine 49. An intrachain disulfide couples cysteine 139 to cysteine 164. Position 159 (aspartate 159) interacts with Zn(2+). The Proton acceptor role is filled by glutamate 201. Residue glutamate 202 participates in Zn(2+) binding. The active-site Proton acceptor is aspartate 248. An N-linked (GlcNAc...) asparagine glycan is attached at asparagine 296. A Zn(2+)-binding site is contributed by histidine 330.

Belongs to the glutaminyl-peptide cyclotransferase family.

Its subcellular location is the secreted. The enzyme catalyses N-terminal L-glutaminyl-[peptide] = N-terminal 5-oxo-L-prolyl-[peptide] + NH4(+). In terms of biological role, responsible for the biosynthesis of pyroglutamyl peptides. Has a bias against acidic and tryptophan residues adjacent to the N-terminal glutaminyl residue and a lack of importance of chain length after the second residue. Also catalyzes N-terminal pyroglutamate formation. In vitro, catalyzes pyroglutamate formation of N-terminally truncated form of APP amyloid-beta peptides [Glu-3]-amyloid-beta. May be involved in the N-terminal pyroglutamate formation of several amyloid-related plaque-forming peptides. This is Glutaminyl-peptide cyclotransferase (QPCT) from Homo sapiens (Human).